The following is a 338-amino-acid chain: Phosphate acyltransferase (338 aa).

Belongs to the PlsX family. Homodimer. Probably interacts with PlsY.

It is found in the cytoplasm. It carries out the reaction a fatty acyl-[ACP] + phosphate = an acyl phosphate + holo-[ACP]. Its pathway is lipid metabolism; phospholipid metabolism. Catalyzes the reversible formation of acyl-phosphate (acyl-PO(4)) from acyl-[acyl-carrier-protein] (acyl-ACP). This enzyme utilizes acyl-ACP as fatty acyl donor, but not acyl-CoA. This chain is Phosphate acyltransferase, found in Alcanivorax borkumensis (strain ATCC 700651 / DSM 11573 / NCIMB 13689 / SK2).